A 138-amino-acid chain; its full sequence is Probable prefoldin subunit 4 (138 aa).

Belongs to the prefoldin subunit beta family. Heterohexamer of two PFD-alpha type and four PFD-beta type subunits.

In terms of biological role, binds specifically to cytosolic chaperonin (c-CPN) and transfers target proteins to it. Binds to nascent polypeptide chain and promotes folding in an environment in which there are many competing pathways for nonnative proteins. The polypeptide is Probable prefoldin subunit 4 (Drosophila melanogaster (Fruit fly)).